A 52-amino-acid polypeptide reads, in one-letter code: Phospholamban (52 aa).

Met1 is subject to N-acetylmethionine. Topologically, residues 1–31 (MEKVQYLTRSAIRRASTIEMPQQARQNLQNL) are cytoplasmic. Position 16 is a phosphoserine; by PKA (Ser16). Residue Thr17 is modified to Phosphothreonine; by CaMK2. Residues 32–52 (FINFCLILICLLLICIIVMLL) traverse the membrane as a helical segment. Cys36 carries the S-palmitoyl cysteine lipid modification.

The protein belongs to the phospholamban family. Homopentamer. Can also form heterooligomers with other sarcoplasmic/endoplasmic reticulum calcium ATPase (SERCA) regulators ARLN, ERLN, SLN and STRIT1/DWORF. Monomer. Interacts with HAX1. Interacts as a monomer with ATP2A2; the interaction decreases ATP2A2 Ca(2+) affinity. Interacts with VMP1; VMP1 competes with PLN and SLN to prevent them from forming an inhibitory complex with ATP2A2. Interacts with S100A1 in a Ca(2+)-dependent manner. Phosphorylated at Thr-17 by CaMK2, and in response to beta-adrenergic stimulation. Phosphorylation by DMPK may stimulate sarcoplasmic reticulum calcium uptake in cardiomyocytes. Phosphorylation by PKA abolishes the inhibition of ATP2A2-mediated calcium uptake. Post-translationally, palmitoylated by ZDHHC16, promoting formation of the homopentamer. In terms of processing, in elongated spermatids, proteolytically cleaved by SPPL2C which modulates intracellular Ca(2+) homeostasis. Expressed in testis (at protein level). In brain, expressed specifically in GABAergic GAD67+ neurons of the thalamic reticular nucleus where it colocalizes with ATP2A2/SERCA2 (at protein level). Expressed in the bladder and in the atria and ventricles of the heart.

It localises to the endoplasmic reticulum membrane. The protein resides in the sarcoplasmic reticulum membrane. Its subcellular location is the mitochondrion membrane. It is found in the membrane. Functionally, reversibly inhibits the activity of ATP2A2/SERCA2 in cardiac sarcoplasmic reticulum by decreasing the apparent affinity of the ATPase for Ca(2+). Binds preferentially to the ATP-bound E1 conformational form of ATP2A2 which predominates at low Ca(2+) concentrations during the diastolic phase of the cardiac cycle. Inhibits ATP2A2 Ca(2+) affinity by disrupting its allosteric activation by ATP. Modulates the contractility of the heart muscle in response to physiological stimuli via its effects on ATP2A2. Modulates calcium re-uptake during muscle relaxation and plays an important role in calcium homeostasis in the heart muscle. The degree of ATP2A2 inhibition depends on the oligomeric state of PLN. ATP2A2 inhibition is alleviated by PLN phosphorylation. Also inhibits the activity of ATP2A3/SERCA3. Controls intracellular Ca(2+) levels in elongated spermatids and may play a role in germ cell differentiation. In the thalamic reticular nucleus of the brain, plays a role in the regulation of sleep patterns and executive functioning. The polypeptide is Phospholamban (Mus musculus (Mouse)).